The sequence spans 237 residues: MRPSGRKLDQMRSVSIEPNVMKHAEGSCLIRMGETHVLCSASIEDKPPPFLKNTGLGWVTAEYGMLPRATTSRNRREAAAGKQSGRTQEIQRLIGRALRAGVDRSALGERQIVIDCDVLQADGGTRCASITGGWVALRLAVNKLLKAGIIVSDPIVDHVAAVSCGIYAGQPVLDLDYAEDSTAGTDGNFVLTGRSRMIEVQMSAEGASFSRDEMGQLLDLAEAGIAELVAAQKAALG.

Residues Arg86 and 124-126 (GTR) each bind phosphate.

The protein belongs to the RNase PH family. Homohexameric ring arranged as a trimer of dimers.

It carries out the reaction tRNA(n+1) + phosphate = tRNA(n) + a ribonucleoside 5'-diphosphate. Functionally, phosphorolytic 3'-5' exoribonuclease that plays an important role in tRNA 3'-end maturation. Removes nucleotide residues following the 3'-CCA terminus of tRNAs; can also add nucleotides to the ends of RNA molecules by using nucleoside diphosphates as substrates, but this may not be physiologically important. Probably plays a role in initiation of 16S rRNA degradation (leading to ribosome degradation) during starvation. The polypeptide is Ribonuclease PH (Cereibacter sphaeroides (strain ATCC 17029 / ATH 2.4.9) (Rhodobacter sphaeroides)).